A 484-amino-acid polypeptide reads, in one-letter code: Neuronal acetylcholine receptor subunit alpha-9 (484 aa).

An N-terminal signal peptide occupies residues 1 to 27 (MKRNNLSSFYVSLWLLFTATMLQAVES). Residues 28–240 (AKGKYAQMLF…FTLILKRKSS (213 aa)) are Extracellular-facing. A glycan (N-linked (GlcNAc...) asparagine) is linked at asparagine 59. The cysteines at positions 157 and 171 are disulfide-linked. Asparagine 172 carries an N-linked (GlcNAc...) asparagine glycan. Residues serine 193 and aspartate 195 each contribute to the Na(+) site. Cysteine 221 and cysteine 222 are oxidised to a cystine. The next 3 membrane-spanning stretches (helical) occupy residues 241–261 (FYIF…PLGF), 271–291 (VSLG…VAEI), and 305–325 (YIAT…IMNV). Over 326-462 (HHCGSEAKPV…WKKVAKVMDR (137 aa)) the chain is Cytoplasmic. Residues 364–395 (RREKEQEHRLEGGDMCRGGDGKSHLSSRNDDS) are disordered. A helical membrane pass occupies residues 463 to 483 (FFMWIFFIMVFFMSVLIIGKA).

Belongs to the ligand-gated ion channel (TC 1.A.9) family. Acetylcholine receptor (TC 1.A.9.1) subfamily. Alpha-9/CHRNA9 sub-subfamily. In terms of assembly, forms homo- or heteropentameric channels in conjunction with CHRNA10. The native outer hair cell receptor is composed of CHRNA9:CHRNA10 heterooligomers. Found in the stoichiometric form (CHRNA9)2:(CHRNA10)3. Expressed in hair cells of the cochlea (at protein level). Expressed in hair cells of the cochlea.

The protein resides in the synaptic cell membrane. Its subcellular location is the cell membrane. The enzyme catalyses Ca(2+)(in) = Ca(2+)(out). It carries out the reaction K(+)(in) = K(+)(out). It catalyses the reaction Na(+)(in) = Na(+)(out). The catalysed reaction is Mg(2+)(in) = Mg(2+)(out). With respect to regulation, activated by a myriad of ligands such as acetylcholine. AChR activity is inhibited by the antagonist alpha-conotoxins RgIA and GeXXA, small disulfide-constrained peptides from cone snails. Functionally, component of neuronal acetylcholine receptors (nAChRs) that function as pentameric, ligand-gated cation channels with high calcium permeability among other activities. nAChRs are excitatory neurotrasnmitter receptors formed by a collection of nAChR subunits known to mediate synaptic transmission in the nervous system and the neuromuscular junction. Each nAchR subunit confers differential attributes to channel properties, including activation, deactivation and desensitization kinetics, pH sensitivity, cation permeability, and binding to allosteric modulators. Forms either homopentamers or heteropentamers with CHRNA10. Expressed in the inner ear, in sympathetic neurons and in other non-neuronal cells, such as skin keratinocytes and lymphocytes. The channel is permeable to a range of divalent cations including calcium, the influx of which may activate a potassium current which hyperpolarizes the cell membrane. The sequence is that of Neuronal acetylcholine receptor subunit alpha-9 (CHRNA9) from Gallus gallus (Chicken).